Here is a 200-residue protein sequence, read N- to C-terminus: MHKAILNSDLIATKAGDVTVYNYDGETREYISTSNEYLAVGVGIPACSCLDAPGTHKAGYAICRSADFNSWEYVPDHRGETVYSTKTGESKEIKAPGDYPENTTTIAPLSPYDKWDGEKWVTDTEAQHSAAVDAAEAQRQSLIDAAMASISLIQLKLQAGRKLTQAETTRLNAVLDYIDAVTATDTSTAPDVIWPELPEA.

The protein belongs to the tfa family.

The protein is Prophage tail fiber assembly protein homolog TfaE (tfaE) of Escherichia coli (strain K12).